Reading from the N-terminus, the 213-residue chain is Probable elongation factor 1-beta/1-delta 1 (213 aa).

The protein belongs to the EF-1-beta/EF-1-delta family. In terms of assembly, EF-1 is composed of 4 subunits: alpha, beta, delta, and gamma.

EF-1-beta and EF-1-delta stimulate the exchange of GDP bound to EF-1-alpha to GTP. The polypeptide is Probable elongation factor 1-beta/1-delta 1 (eef-1B.1) (Caenorhabditis elegans).